We begin with the raw amino-acid sequence, 152 residues long: Deoxyuridine 5'-triphosphate nucleotidohydrolase (152 aa).

Substrate-binding positions include 65-67, N78, and 82-84; these read RSG and TID.

This sequence belongs to the dUTPase family. It depends on Mg(2+) as a cofactor.

It catalyses the reaction dUTP + H2O = dUMP + diphosphate + H(+). Its pathway is pyrimidine metabolism; dUMP biosynthesis; dUMP from dCTP (dUTP route): step 2/2. This enzyme is involved in nucleotide metabolism: it produces dUMP, the immediate precursor of thymidine nucleotides and it decreases the intracellular concentration of dUTP so that uracil cannot be incorporated into DNA. In Chlorobaculum tepidum (strain ATCC 49652 / DSM 12025 / NBRC 103806 / TLS) (Chlorobium tepidum), this protein is Deoxyuridine 5'-triphosphate nucleotidohydrolase.